The chain runs to 172 residues: Interferon tau-3 (172 aa).

Disulfide bonds link C1/C99 and C29/C139.

The protein belongs to the alpha/beta interferon family. IFN-alphaII subfamily. Constitutively and exclusively expressed in the mononuclear cells of the extraembryonic trophectoderm.

It localises to the secreted. In terms of biological role, paracrine hormone primarily responsible for maternal recognition of pregnancy. Interacts with endometrial receptors, probably type I interferon receptors, and blocks estrogen receptor expression, preventing the estrogen-induced increase in oxytocin receptor expression in the endometrium. This results in the suppression of the pulsatile endometrial release of the luteolytic hormone prostaglandin F2-alpha, hindering the regression of the corpus luteum (luteolysis) and therefore a return to ovarian cyclicity. This, and a possible direct effect of IFN-tau on prostaglandin synthesis, leads in turn to continued ovarian progesterone secretion, which stimulates the secretion by the endometrium of the nutrients required for the growth of the conceptus. In summary, displays particularly high antiviral and antiproliferative potency concurrently with particular weak cytotoxicity, high antiluteolytic activity and immunomodulatory properties. In contrast with other IFNs, IFN-tau is not virally inducible. The polypeptide is Interferon tau-3 (IFNT3) (Ovis aries (Sheep)).